A 502-amino-acid polypeptide reads, in one-letter code: Cyclin-dependent kinase 19 (502 aa).

Methionine 1 carries the N-acetylmethionine modification. The region spanning 21–335 is the Protein kinase domain; that stretch reads EYEGCKVGRG…SEQALQDPYF (315 aa). ATP-binding positions include 27–35 and lysine 52; that span reads VGRGTYGHV. The active-site Proton acceptor is the aspartate 151. Positions 359-502 are disordered; the sequence is LNEDDPEEKG…YHPSHQAHRY (144 aa). Over residues 371-392 the composition is skewed to low complexity; sequence NQQQQQNQHQQPTAPPQQAAAP. Over residues 408 to 421 the composition is skewed to gly residues; the sequence is TAGGAGAGVGGTGA. A compositionally biased stretch (polar residues) spans 424-435; the sequence is QHSQDSSLNQVP. Serine 449 carries the post-translational modification Phosphoserine. Polar residues predominate over residues 458-467; the sequence is YQHSSSRLNY. Residues 468–496 are compositionally biased toward low complexity; it reads QSSVQGSSQSQSTLGYSSSSQQSSQYHPS.

It belongs to the protein kinase superfamily. CMGC Ser/Thr protein kinase family. CDC2/CDKX subfamily.

Its subcellular location is the cytoplasm. It localises to the perinuclear region. The protein localises to the nucleus. The enzyme catalyses L-seryl-[protein] + ATP = O-phospho-L-seryl-[protein] + ADP + H(+). It carries out the reaction L-threonyl-[protein] + ATP = O-phospho-L-threonyl-[protein] + ADP + H(+). In Homo sapiens (Human), this protein is Cyclin-dependent kinase 19 (CDK19).